A 269-amino-acid chain; its full sequence is Diaminopimelate epimerase (269 aa).

Positions 20 and 63 each coordinate substrate. Residue Cys-72 is the Proton donor of the active site. Substrate-binding positions include 73–74 (GN), Asn-179, and 197–198 (ER). Cys-207 acts as the Proton acceptor in catalysis. 208 to 209 (GT) contributes to the substrate binding site.

This sequence belongs to the diaminopimelate epimerase family. In terms of assembly, homodimer.

It localises to the cytoplasm. The enzyme catalyses (2S,6S)-2,6-diaminopimelate = meso-2,6-diaminopimelate. It functions in the pathway amino-acid biosynthesis; L-lysine biosynthesis via DAP pathway; DL-2,6-diaminopimelate from LL-2,6-diaminopimelate: step 1/1. Catalyzes the stereoinversion of LL-2,6-diaminopimelate (L,L-DAP) to meso-diaminopimelate (meso-DAP), a precursor of L-lysine and an essential component of the bacterial peptidoglycan. This is Diaminopimelate epimerase from Chlamydia muridarum (strain MoPn / Nigg).